We begin with the raw amino-acid sequence, 316 residues long: Heme oxygenase 2 (316 aa).

Over residues 1–12 the composition is skewed to acidic residues; it reads MSAEVETSEGVD. The tract at residues 1-29 is disordered; sequence MSAEVETSEGVDESEKKNSGALEKENQMR. S2 is modified (N-acetylserine). S2 bears the Phosphoserine mark. The segment covering 13 to 27 has biased composition (basic and acidic residues); the sequence is ESEKKNSGALEKENQ. H45 is a binding site for heme b. 2 HRM repeats span residues 264–269 and 281–286; these read KCPFYA and SCPFRT. C265 and C282 each carry S-nitrosocysteine.

Belongs to the heme oxygenase family. S-nitrosylated by BLVRB.

It localises to the microsome. The protein localises to the endoplasmic reticulum. It catalyses the reaction heme b + 3 reduced [NADPH--hemoprotein reductase] + 3 O2 = biliverdin IXalpha + CO + Fe(2+) + 3 oxidized [NADPH--hemoprotein reductase] + 3 H2O + H(+). Heme oxygenase cleaves the heme ring at the alpha methene bridge to form biliverdin. Biliverdin is subsequently converted to bilirubin by biliverdin reductase. Under physiological conditions, the activity of heme oxygenase is highest in the spleen, where senescent erythrocytes are sequestrated and destroyed. Heme oxygenase 2 could be implicated in the production of carbon monoxide in brain where it could act as a neurotransmitter. The chain is Heme oxygenase 2 (HMOX2) from Macaca fascicularis (Crab-eating macaque).